The primary structure comprises 64 residues: Large ribosomal subunit protein bL35 (64 aa).

Belongs to the bacterial ribosomal protein bL35 family.

This chain is Large ribosomal subunit protein bL35, found in Ureaplasma urealyticum serovar 10 (strain ATCC 33699 / Western).